The chain runs to 682 residues: Transcription factor 12 (682 aa).

Positions 19–27 match the 9aaTAD motif; sequence DLLDFSAMF. Disordered regions lie at residues 25-122, 140-219, and 281-313; these read AMFS…LYSR, LGSP…PPTS, and SVSP…ASHT. 2 stretches are compositionally biased toward polar residues: residues 30-48 and 56-76; these read PVNS…QFSG and GTTS…SRGF. Phosphoserine occurs at positions 47, 67, and 79. Residues 81 to 93 are compositionally biased toward basic and acidic residues; the sequence is HYSDHLNDSRLGA. S98 is modified (phosphoserine). Polar residues-rich tracts occupy residues 101 to 121 and 144 to 163; these read PFMN…SLYS and AQLS…SATS. K110 participates in a covalent cross-link: Glycyl lysine isopeptide (Lys-Gly) (interchain with G-Cter in SUMO2). S116 is modified (phosphoserine). The leucine-zipper stretch occupies residues 119 to 140; the sequence is LYSRDTGLPGCQSSLLRQDLGL. Residue K181 forms a Glycyl lysine isopeptide (Lys-Gly) (interchain with G-Cter in SUMO2) linkage. The tract at residues 182–196 is interaction with RUNX1T1; that stretch reads KVRKVPPGLPSSVYA. Over residues 282–306 the composition is skewed to polar residues; it reads VSPTDINTSLPPMSSFHRGSTSSSP. T313 is modified (phosphothreonine). S333 carries the phosphoserine modification. 2 disordered regions span residues 349–395 and 462–580; these read PDHT…SLHS and SASM…ERRM. Low complexity predominate over residues 352 to 363; sequence TSSSFPSNPSTP. Composition is skewed to polar residues over residues 364 to 376 and 383 to 395; these read VGSP…TSQW and APSS…SLHS. Residues 481–492 show a composition bias toward low complexity; sequence SVLSSTVTTSST. The segment covering 506-517 has biased composition (polar residues); that stretch reads LQSQSGTVVTTE. Composition is skewed to basic and acidic residues over residues 518–530 and 536–551; these read IKTE…ENLH and DDMK…DIKV. K519 participates in a covalent cross-link: Glycyl lysine isopeptide (Lys-Gly) (interchain with G-Cter in SUMO2). Residue S540 is modified to Phosphoserine. Residue K550 forms a Glycyl lysine isopeptide (Lys-Gly) (interchain with G-Cter in SUMO2) linkage. T557 carries the post-translational modification Phosphothreonine. Phosphoserine occurs at positions 558 and 559. Residues 568–580 show a composition bias toward basic and acidic residues; the sequence is PEQKIEREKERRM. Positions 577–630 constitute a bHLH domain; sequence ERRMANNARERLRVRDINEAFKELGRMCQLHLKSEKPQTKLLILHQAVAVILSL. Glycyl lysine isopeptide (Lys-Gly) (interchain with G-Cter in SUMO2) cross-links involve residues K609 and K653. The tract at residues 632–655 is class A specific domain; sequence QQVRERNLNPKAACLKRREEEKVS. The disordered stretch occupies residues 651–682; it reads EEKVSAVSAEPPTTLPGTHPGLSETTNPMGHM. Residues 661-672 are compositionally biased toward low complexity; sequence PPTTLPGTHPGL. The span at 673–682 shows a compositional bias: polar residues; it reads SETTNPMGHM.

Efficient DNA binding requires dimerization with another bHLH protein. Forms homo- or heterooligomers with myogenin, E12 and ITF2 proteins. Interacts with PTF1A. Interacts with NEUROD2. Interacts with RUNX1T1. Interacts with AML1-MTG8/ETO (via nervy homology region 2 in oligomerized form). Interacts with BHLHA9. In terms of tissue distribution, expressed in several tissues and cell types including skeletal muscle, thymus, and a B-cell line.

It localises to the nucleus. Its function is as follows. Transcriptional regulator. Involved in the initiation of neuronal differentiation. Activates transcription by binding to the E box (5'-CANNTG-3'). May be involved in the functional network that regulates the development of the GnRH axis. The sequence is that of Transcription factor 12 (TCF12) from Homo sapiens (Human).